We begin with the raw amino-acid sequence, 170 residues long: Putative apoptosis inhibitor ORF87 (170 aa).

BIR repeat units lie at residues 22 to 92 (RIKS…PVGK) and 104 to 169 (RLKS…KLSS).

In terms of biological role, may act as an apoptosis inhibitor. The polypeptide is Putative apoptosis inhibitor ORF87 (Ostreid herpesvirus 1 (isolate France) (OsHV-1)).